The sequence spans 366 residues: Cytochrome c mitochondrial import factor CYC2 (366 aa).

The N-terminal 50 residues, 1-50 (MLWKNYVLSSSRITRRLHKSPRKSSFSKNFFITGCLLTVGAVSSYLTYRY), are a transit peptide targeting the mitochondrion. The 122-residue stretch at 63-184 (SYFVKYKISH…RGPFIDYEFP (122 aa)) folds into the FAD-binding FR-type domain.

The cofactor is FAD.

Its subcellular location is the mitochondrion inner membrane. Redox component that participates in c-type cytochrome biogenesis in the mitochondrial intermembrane space. May play a role in the reduction of heme prior to its ligation to apocytochrome c by cytochrome c heme lyase. Has oxidoreductase activity in vitro. This Saccharomyces cerevisiae (strain ATCC 204508 / S288c) (Baker's yeast) protein is Cytochrome c mitochondrial import factor CYC2 (CYC2).